Reading from the N-terminus, the 190-residue chain is ATP-dependent Clp protease proteolytic subunit 2 (190 aa).

The Nucleophile role is filled by S98. Residue H123 is part of the active site.

Belongs to the peptidase S14 family. As to quaternary structure, fourteen ClpP subunits assemble into 2 heptameric rings which stack back to back to give a disk-like structure with a central cavity, resembling the structure of eukaryotic proteasomes.

It localises to the cytoplasm. It catalyses the reaction Hydrolysis of proteins to small peptides in the presence of ATP and magnesium. alpha-casein is the usual test substrate. In the absence of ATP, only oligopeptides shorter than five residues are hydrolyzed (such as succinyl-Leu-Tyr-|-NHMec, and Leu-Tyr-Leu-|-Tyr-Trp, in which cleavage of the -Tyr-|-Leu- and -Tyr-|-Trp bonds also occurs).. Cleaves peptides in various proteins in a process that requires ATP hydrolysis. Has a chymotrypsin-like activity. Plays a major role in the degradation of misfolded proteins. The chain is ATP-dependent Clp protease proteolytic subunit 2 from Bacillus licheniformis (strain ATCC 14580 / DSM 13 / JCM 2505 / CCUG 7422 / NBRC 12200 / NCIMB 9375 / NCTC 10341 / NRRL NRS-1264 / Gibson 46).